Reading from the N-terminus, the 196-residue chain is Riboflavin transporter RibU (196 aa).

The next 5 membrane-spanning stretches (helical) occupy residues 14–34, 46–66, 80–100, 120–140, and 164–184; these read LIAI…VPII, IVPV…WVIL, VNTY…ITVL, LISS…FVAI, and MVLP…MIIL.

It belongs to the prokaryotic riboflavin transporter (P-RFT) (TC 2.A.87) family. In E.coli forms a stable energy-coupling factor (ECF) transporter complex probably composed of a membrane-embedded substrate-binding protein (S component), 2 ATP-binding proteins (A components) and 2 transmembrane proteins (T component). May be able to interact with more than 1 S component at a time.

The protein localises to the cell membrane. Its function is as follows. Probable riboflavin-binding protein that interacts with the energy-coupling factor (ECF) ABC-transporter complex. Unlike classic ABC transporters this ECF transporter provides the energy necessary to transport a number of different substrates. The substrates themselves are bound by transmembrane, not extracytoplasmic soluble proteins and transport it into cells. The sequence is that of Riboflavin transporter RibU (ribU) from Leuconostoc mesenteroides subsp. mesenteroides (strain ATCC 8293 / DSM 20343 / BCRC 11652 / CCM 1803 / JCM 6124 / NCDO 523 / NBRC 100496 / NCIMB 8023 / NCTC 12954 / NRRL B-1118 / 37Y).